A 244-amino-acid chain; its full sequence is tRNA pseudouridine synthase A (244 aa).

Asp-52 functions as the Nucleophile in the catalytic mechanism. Tyr-110 provides a ligand contact to substrate.

This sequence belongs to the tRNA pseudouridine synthase TruA family. In terms of assembly, homodimer.

The catalysed reaction is uridine(38/39/40) in tRNA = pseudouridine(38/39/40) in tRNA. Formation of pseudouridine at positions 38, 39 and 40 in the anticodon stem and loop of transfer RNAs. The sequence is that of tRNA pseudouridine synthase A from Finegoldia magna (strain ATCC 29328 / DSM 20472 / WAL 2508) (Peptostreptococcus magnus).